Reading from the N-terminus, the 831-residue chain is Sodium/hydrogen exchanger 3 (831 aa).

Residues 1–28 (MWHPALGPGWKPLLALALALTSLRGVRG) form the signal peptide. The Extracellular segment spans residues 29-48 (IEEEPNSGGSFQIVTFKWHH). The helical transmembrane segment at 49-71 (VQDPYIIALWILVASLAKIVFHL) threads the bilayer. Residues 72 to 79 (SHKVTSVV) lie on the Cytoplasmic side of the membrane. The helical transmembrane segment at 80–99 (PESALLIVLGLVLGGIVWAA) threads the bilayer. At 100–108 (DHIASFTLT) the chain is on the extracellular side. A helical membrane pass occupies residues 109 to 126 (PTLFFFYLLPPIVLDAGY). The Cytoplasmic portion of the chain corresponds to 127–129 (FMP). Residues 130 to 165 (NRLFFGNLGTILLYAVIGTIWNAATTGLSLYGVFLS) form a helical membrane-spanning segment. Residues G135, G138, and T139 each coordinate a 1,2-diacyl-sn-glycero-3-phospho-(1D-myo-inositol). At 166–178 (GLMGELKIGLLDF) the chain is on the extracellular side. The helical transmembrane segment at 179–200 (LLFGSLIAAVDPVAVLAVFEEV) threads the bilayer. The Cytoplasmic segment spans residues 201 to 202 (HV). The chain crosses the membrane as a helical span at residues 203-234 (NEVLFIIVFGESLLNDAVTVVLYNVFESFVTL). Residues 235–241 (GGDAVTG) are Extracellular-facing. A helical membrane pass occupies residues 242-276 (VDCVKGIVSFFVVSLGGTLVGVIFAFLLSLVTRFT). At 277–278 (KH) the chain is on the cytoplasmic side. Residues 279–301 (VRIIEPGFVFVISYLSYLTSEML) traverse the membrane as a helical segment. The Extracellular segment spans residues 302 to 303 (SL). Residues 304–320 (SAILAITFCGICCQKYV) form a helical membrane-spanning segment. The Cytoplasmic portion of the chain corresponds to 321-327 (KANISEQ). Residues 328–356 (SATTVRYTMKMLASGAETIIFMFLGISAV) form a helical membrane-spanning segment. The Extracellular segment spans residues 357–364 (DPVIWTWN). A helical transmembrane segment spans residues 365 to 386 (TAFVLLTLVFISVYRAIGVVLQ). At 387–399 (TWILNRYRMVQLE) the chain is on the cytoplasmic side. M395 contacts a 1,2-diacyl-sn-glycero-3-phospho-(1D-myo-inositol). Residues 400-423 (TIDQVVMSYGGLRGAVAYALVVLL) traverse the membrane as a helical segment. Residues 424-430 (DEKKVKE) lie on the Extracellular side of the membrane. Residues 431–464 (KNLFVSTTLIVVFFTVIFQGLTIKPLVQWLKVKR) form a helical membrane-spanning segment. At 465-831 (SEQREPKLNE…QPASPESTHM (367 aa)) the chain is on the cytoplasmic side. Q494, I495, and H497 together coordinate a 1,2-diacyl-sn-glycero-3-phospho-(1D-myo-inositol). Phosphoserine is present on residues S552 and S560. The tract at residues 573-587 (RPSTVEASVSYFLRE) is interaction with EZR. Residues 588–665 (NVSAVCLDMQ…RKRLESFKSA (78 aa)) form an interaction with NHERF4 region. The segment at 589-693 (VSAVCLDMQS…AQKRRNSSIP (105 aa)) is interaction with AHCYL1. A phosphoserine mark is found at S590 and S605. S661 carries the post-translational modification Phosphoserine; by SGK1. A phosphoserine mark is found at S716, S807, and S810. Positions 808-831 (VDSFLQADGPEEQLQPASPESTHM) are disordered. The segment covering 822–831 (QPASPESTHM) has biased composition (polar residues).

Belongs to the monovalent cation:p,roton antiporter 1 (CPA1) transporter (TC 2.A.36) family. As to quaternary structure, homodimer. Found in the forms of complex and dynamic macromolecular complexes. Binds NHERF1 and NHERF2. Interacts with NHERF4 and interactions decrease in response to elevated calcium ion levels. Interacts with PDZK1 (via C-terminal PDZ domain). Interacts with CHP1; this interaction increases trafficking and activity at the plasma membrane of SLC9A3. Interacts with CHP2 and SHANK2. Interacts with AHCYL1; the interaction is required for SLC9A3 activity. Interacts with EZR; interaction targets SLC9A3 to the apical membrane. Interacts with SNX27 (via PDZ domains); directs SLC9A3 membrane insertion from early endosomes to the plasma membrane. In terms of processing, phosphorylated by PRKACA at Ser-552 and Ser-605, which inhibits activity. Phosphorylation of Ser-605 is essential for cAMP-mediated inhibition of SLC9A3. Phosphorylation at Ser-661 by SGK1 is associated with increased abundance at the cell membrane. Phosphorylation at Ser-716 by CSNK2A1 regulates SLC9A3 activity through the formation of multiple signaling complexes. In terms of tissue distribution, most abundant in colon and small intestine, followed by kidney and stomach. In kidney, expressed in proximal tubules and outer medulla (at protein level).

The protein resides in the apical cell membrane. Its subcellular location is the cell membrane. The protein localises to the recycling endosome membrane. It is found in the early endosome membrane. The enzyme catalyses Na(+)(in) + H(+)(out) = Na(+)(out) + H(+)(in). Its activity is regulated as follows. Seems to switch between active and inactive modes in response to various stimuli. Activated directly or indirectly by membrane phosphatidylinositol (PIs). Regulated by a variety of auxiliary proteins, which facilitate the maturation, cell surface expression and function of the transporter. Inhibited specifically by the drug tenapanor. In terms of biological role, plasma membrane Na(+)/H(+) antiporter. Exchanges intracellular H(+) ions for extracellular Na(+) in 1:1 stoichiometry, playing a key role in salt and fluid absorption and pH homeostasis. Major apical Na(+)/H(+) exchanger in kidney and intestine playing an important role in renal and intestine Na(+) absorption and blood pressure regulation. This is Sodium/hydrogen exchanger 3 (Slc9a3) from Rattus norvegicus (Rat).